Reading from the N-terminus, the 489-residue chain is Betaine aldehyde dehydrogenase (489 aa).

2 residues coordinate K(+): Thr-26 and Asp-93. 150–152 serves as a coordination point for NAD(+); it reads GAW. Residue Lys-162 is the Charge relay system of the active site. 176–179 serves as a coordination point for NAD(+); sequence KPSE. Val-180 contacts K(+). NAD(+) is bound at residue 229 to 232; that stretch reads GVET. Leu-245 provides a ligand contact to K(+). Residue Glu-251 is the Proton acceptor of the active site. Residues Gly-253, Cys-285, and Glu-386 each contribute to the NAD(+) site. The active-site Nucleophile is the Cys-285. Cys-285 carries the post-translational modification Cysteine sulfenic acid (-SOH). K(+)-binding residues include Lys-456 and Gly-459. The active-site Charge relay system is the Glu-463.

It belongs to the aldehyde dehydrogenase family. Dimer of dimers. Requires K(+) as cofactor.

It carries out the reaction betaine aldehyde + NAD(+) + H2O = glycine betaine + NADH + 2 H(+). Its pathway is amine and polyamine biosynthesis; betaine biosynthesis via choline pathway; betaine from betaine aldehyde: step 1/1. Involved in the biosynthesis of the osmoprotectant glycine betaine. Catalyzes the irreversible oxidation of betaine aldehyde to the corresponding acid. In Burkholderia cenocepacia (strain ATCC BAA-245 / DSM 16553 / LMG 16656 / NCTC 13227 / J2315 / CF5610) (Burkholderia cepacia (strain J2315)), this protein is Betaine aldehyde dehydrogenase.